Consider the following 264-residue polypeptide: Thiazole synthase (264 aa).

Lys106 (schiff-base intermediate with DXP) is an active-site residue. 1-deoxy-D-xylulose 5-phosphate is bound by residues Gly167, 193-194 (AG), and 215-216 (NS).

Belongs to the ThiG family. Homotetramer. Forms heterodimers with either ThiH or ThiS.

Its subcellular location is the cytoplasm. The enzyme catalyses [ThiS sulfur-carrier protein]-C-terminal-Gly-aminoethanethioate + 2-iminoacetate + 1-deoxy-D-xylulose 5-phosphate = [ThiS sulfur-carrier protein]-C-terminal Gly-Gly + 2-[(2R,5Z)-2-carboxy-4-methylthiazol-5(2H)-ylidene]ethyl phosphate + 2 H2O + H(+). Its pathway is cofactor biosynthesis; thiamine diphosphate biosynthesis. Its function is as follows. Catalyzes the rearrangement of 1-deoxy-D-xylulose 5-phosphate (DXP) to produce the thiazole phosphate moiety of thiamine. Sulfur is provided by the thiocarboxylate moiety of the carrier protein ThiS. In vitro, sulfur can be provided by H(2)S. This is Thiazole synthase from Prochlorococcus marinus (strain MIT 9312).